The chain runs to 333 residues: Meiotic recombination protein rec24 (333 aa).

This sequence belongs to the MEI4L family. As to quaternary structure, interacts with Rec7, as part of the meiotic recombination initiation complex.

Its subcellular location is the cytoplasm. The protein resides in the nucleus. In terms of biological role, required for correct meiotic chromosome segregation and recombination. Accessory protein required for Rec12 activity, which is involved in formation of the double-strand breaks (DSBs) that initiate meiotic recombination. The protein is Meiotic recombination protein rec24 (rec24) of Schizosaccharomyces pombe (strain 972 / ATCC 24843) (Fission yeast).